Consider the following 399-residue polypeptide: Elongation factor Tu (399 aa).

Residues 10–209 (KPHVNIGTIG…DVDEYIPTPV (200 aa)) form the tr-type G domain. The interval 19–26 (GHVDHGKT) is G1. 19 to 26 (GHVDHGKT) serves as a coordination point for GTP. T26 provides a ligand contact to Mg(2+). Positions 62 to 66 (GITIN) are G2. Residues 83–86 (DCPG) form a G3 region. GTP-binding positions include 83–87 (DCPGH) and 138–141 (NKCD). A G4 region spans residues 138 to 141 (NKCD). Residues 175-177 (SAY) are G5.

This sequence belongs to the TRAFAC class translation factor GTPase superfamily. Classic translation factor GTPase family. EF-Tu/EF-1A subfamily. As to quaternary structure, monomer.

The protein localises to the cytoplasm. The enzyme catalyses GTP + H2O = GDP + phosphate + H(+). GTP hydrolase that promotes the GTP-dependent binding of aminoacyl-tRNA to the A-site of ribosomes during protein biosynthesis. This Bifidobacterium animalis subsp. lactis (strain AD011) protein is Elongation factor Tu.